The following is a 4138-amino-acid chain: Fumosorinone synthetase (4138 aa).

The 441-residue stretch at 15–455 (PEPIAIVGSA…GTNAHAIIER (441 aa)) folds into the Ketosynthase family 3 (KS3) domain. Residues cysteine 189, histidine 328, and histidine 375 each act as for beta-ketoacyl synthase activity in the active site. Residues 590–921 (VFTGQGAQWP…APDAVSFSTA (332 aa)) form a malonyl-CoA:ACP transacylase (MAT) domain region. An N-terminal hotdog fold region spans residues 990 to 1133 (HELLGRRAVD…GLIDVHLGPR (144 aa)). A dehydratase (DH) domain region spans residues 990-1306 (HELLGRRAVD…GFEVRSVGER (317 aa)). One can recognise a PKS/mFAS DH domain in the interval 990 to 1309 (HELLGRRAVD…VRSVGERDAA (320 aa)). Catalysis depends on histidine 1022, which acts as the Proton acceptor; for dehydratase activity. A C-terminal hotdog fold region spans residues 1157–1309 (LQEIDCEKLY…VRSVGERDAA (153 aa)). Aspartate 1216 serves as the catalytic Proton donor; for dehydratase activity. The segment at 1456–1650 (RFYAEDKGMQ…FSGADHVAHD (195 aa)) is methyltransferase (MT) domain. Residues 2205–2379 (TYLMVGAAGG…AASIIHVGFV (175 aa)) form a ketoreductase (KR) domain region. One can recognise a Carrier 1 domain in the interval 2507–2587 (EAAAAVRRAF…QLSTLAAKLA (81 aa)). At serine 2547 the chain carries O-(pantetheine 4'-phosphoryl)serine. Residues 2587–2683 (ARQQSPRKEG…TEPKTEDKVS (97 aa)) are disordered. Residues 2610–2621 (TQDKLVDDKEQK) show a composition bias toward basic and acidic residues. Residues 2622–2643 (VQVTSSLAKADSLTQEMQASAH) show a composition bias toward polar residues. Over residues 2647-2659 (DSATNPTPSSTAS) the composition is skewed to low complexity. Polar residues predominate over residues 2664–2675 (SNSQSTRSTSTE). The condensation (C) domain stretch occupies residues 2701-3128 (REAPMSAAQA…ASQRVRECAV (428 aa)). The segment at 3162-3564 (CQKNSARTAI…DGTLLCFGRI (403 aa)) is adenylation (A) (KR) domain. A Carrier 2 domain is found at 3680–3759 (EKMTIQEGEL…GMTRCVLAQR (80 aa)). Serine 3719 bears the O-(pantetheine 4'-phosphoryl)serine mark. A reductase (RED) domain region spans residues 3813-4045 (LTGATGFLGG…LDFGTVDAVV (233 aa)).

This sequence in the C-terminal section; belongs to the NRP synthetase family.

Hybrid PKS-NRPS synthetase; part of the gene cluster that mediates the biosynthesis of fumosorinone, a 2-pyridone alkaloid that acts as an inhibitor of protein tyrosine phosphatase 1B which is implicated asa negative regulator of insulin receptor signaling and a potential drug target for the treatment of type II diabetes and other associated metabolic syndromes. The polyketide-amino acid backbone of fumosorinone is first assembled by the PKS-NRPS hybrid fumoS. The PKS modules condense one acetyl-CoA starter unit with 7 malonyl-CoA units, programmed C-methylations occurring after the first 3 and the sixth extensions, and cycles of full reduction occurring after the first 2 extensions. Because fumoS lacks a designated enoyl reductase (ER) domain, the required activity is provided the enoyl reductase fumoC. Upon formation of the polyketide backbone on the thiotemplate, the polyketide is transferred to the NRPS module and linked to tyrosine to produce the acyltetramic acid intermediate called prefumosorinone A. The cytochrome P450 monooxygenase fumoA then probably catalyzes an unprecedented oxidative ring expansion of prefumosorinone A to form prefumosorinone B which contains the 2-pyridone core of fumosorinone. The cytochrome P450 monooxygenase fumoB might hydroxylate the nitrogen of prefumosorinone B, but not the acyltetramic acid prefumosorinone A, to form fumosorinone. The polypeptide is Fumosorinone synthetase (Cordyceps fumosorosea (strain ARSEF 2679) (Isaria fumosorosea)).